Here is a 907-residue protein sequence, read N- to C-terminus: Dual serine/threonine and tyrosine protein kinase (907 aa).

Residues 373–409 (RKKENELYESLMNIANRKQEEMKDMIVETLNTMKEEL) adopt a coiled-coil conformation. Residues 630-884 (PKLGQELGRG…PLLGIVQPML (255 aa)) enclose the Protein kinase domain. ATP is bound by residues 636-644 (LGRGQYGVV) and K659. The active-site Proton acceptor is the D755.

This sequence belongs to the protein kinase superfamily. Ser/Thr protein kinase family.

It is found in the cytoplasm. Its subcellular location is the cell membrane. The protein resides in the apical cell membrane. The protein localises to the basolateral cell membrane. It localises to the cell junction. The enzyme catalyses L-seryl-[protein] + ATP = O-phospho-L-seryl-[protein] + ADP + H(+). The catalysed reaction is L-threonyl-[protein] + ATP = O-phospho-L-threonyl-[protein] + ADP + H(+). It carries out the reaction L-tyrosyl-[protein] + ATP = O-phospho-L-tyrosyl-[protein] + ADP + H(+). In terms of biological role, acts as a positive regulator of ERK phosphorylation downstream of fibroblast growth factor-receptor activation. Involved in the regulation of both caspase-dependent apoptosis and caspase-independent cell death. In the skin, it plays a predominant role in suppressing caspase-dependent apoptosis in response to UV stress in a range of dermal cell types. This chain is Dual serine/threonine and tyrosine protein kinase, found in Macaca mulatta (Rhesus macaque).